A 236-amino-acid polypeptide reads, in one-letter code: ATP synthase subunit a (236 aa).

Transmembrane regions (helical) follow at residues 18–38, 79–99, 112–132, 174–194, and 205–227; these read STVM…FIST, GITL…FSIV, DPTV…FYGV, IYAG…GAVG, and WQGF…TMVY.

This sequence belongs to the ATPase A chain family. In terms of assembly, F-type ATPases have 2 components, CF(1) - the catalytic core - and CF(0) - the membrane proton channel. CF(1) has five subunits: alpha(3), beta(3), gamma(1), delta(1), epsilon(1). CF(0) has three main subunits: a(1), b(2) and c(9-12). The alpha and beta chains form an alternating ring which encloses part of the gamma chain. CF(1) is attached to CF(0) by a central stalk formed by the gamma and epsilon chains, while a peripheral stalk is formed by the delta and b chains.

It localises to the cell membrane. Functionally, key component of the proton channel; it plays a direct role in the translocation of protons across the membrane. In Lysinibacillus sphaericus (strain C3-41), this protein is ATP synthase subunit a.